The sequence spans 145 residues: MAKKVVGTIELMIPAQQASPSPPVGPALGQHGVNIMEFVKSFNAATAEMKPGTVVPVVITVYADRSFTFILKTPPASYLLKEAAGIKKGASDPKREKVGKVTKEQIREIAEIKMKDLNTEDIEAAMRIIAGTARSMGIEVEGLEA.

This sequence belongs to the universal ribosomal protein uL11 family. In terms of assembly, part of the ribosomal stalk of the 50S ribosomal subunit. Interacts with L10 and the large rRNA to form the base of the stalk. L10 forms an elongated spine to which L12 dimers bind in a sequential fashion forming a multimeric L10(L12)X complex. One or more lysine residues are methylated.

Forms part of the ribosomal stalk which helps the ribosome interact with GTP-bound translation factors. The protein is Large ribosomal subunit protein uL11 of Persephonella marina (strain DSM 14350 / EX-H1).